Consider the following 370-residue polypeptide: Accessory Sec system protein translocase subunit SecY2 (370 aa).

A run of 9 helical transmembrane segments spans residues 17 to 37 (IIFT…PAIT), 65 to 85 (VFSL…LFYY), 105 to 125 (IFTL…LLSH), 134 to 154 (WLII…SDLN), 155 to 175 (MRFG…RSIM), 188 to 208 (LLIS…FIEI), 240 to 260 (IAIM…NLIV), 276 to 296 (FSTP…SYGI), and 339 to 359 (WIGA…TLLI).

Belongs to the SecY/SEC61-alpha family. SecY2 subfamily. As to quaternary structure, component of the accessory SecA2/SecY2 protein translocase complex required to export cell wall proteins. May form heterotrimers with SecE and SecG subunits.

It is found in the cell membrane. In terms of biological role, part of the accessory SecA2/SecY2 system specifically required for export of possible cell wall proteins. The central subunit of a protein translocation channel. This chain is Accessory Sec system protein translocase subunit SecY2, found in Staphylococcus carnosus (strain TM300).